Consider the following 157-residue polypeptide: 2-C-methyl-D-erythritol 2,4-cyclodiphosphate synthase (157 aa).

Positions 8 and 10 each coordinate a divalent metal cation. Residues 8 to 10 (DVH) and 34 to 35 (HS) contribute to the 4-CDP-2-C-methyl-D-erythritol 2-phosphate site. His-42 serves as a coordination point for a divalent metal cation. 4-CDP-2-C-methyl-D-erythritol 2-phosphate is bound by residues 56–58 (DIG), 61–65 (FPDTD), 100–106 (AQAPKMA), 132–135 (TTTE), Phe-139, and Arg-142.

It belongs to the IspF family. In terms of assembly, homotrimer. Requires a divalent metal cation as cofactor.

The catalysed reaction is 4-CDP-2-C-methyl-D-erythritol 2-phosphate = 2-C-methyl-D-erythritol 2,4-cyclic diphosphate + CMP. It functions in the pathway isoprenoid biosynthesis; isopentenyl diphosphate biosynthesis via DXP pathway; isopentenyl diphosphate from 1-deoxy-D-xylulose 5-phosphate: step 4/6. Involved in the biosynthesis of isopentenyl diphosphate (IPP) and dimethylallyl diphosphate (DMAPP), two major building blocks of isoprenoid compounds. Catalyzes the conversion of 4-diphosphocytidyl-2-C-methyl-D-erythritol 2-phosphate (CDP-ME2P) to 2-C-methyl-D-erythritol 2,4-cyclodiphosphate (ME-CPP) with a corresponding release of cytidine 5-monophosphate (CMP). In Pseudomonas fluorescens (strain SBW25), this protein is 2-C-methyl-D-erythritol 2,4-cyclodiphosphate synthase.